The primary structure comprises 337 residues: MFYEKDADVDLIKSKKIAIFGYGSQGHAHALNLKDSGAKEVVVALRDGSASKAKAESKGLRVMNMSDAAEWAEVAMILTPDELQASIYKNHIEQRIKQGTSLAFAHGLNIHYKLIDARKDLDVFMVAPKGPGHLVRSEFERGGGVPCLFAVHQDGTGKARDLALSYASAIGGGKSGIIETTFKDECETDLFGEQSVLCGGLVELIKNGFETLTEAGYEPEMAYFECLHEVKLIVDLIYEGGIANMNYSISNTAEYGEYVSGKKVVDSESKKRMKEVLADIQSGKFTKDWMKECEGGQKNFLKMRKDLADHPIEKVGAELRAMMPWIGKKKLIDSDKS.

The KARI N-terminal Rossmann domain maps to 1 to 180 (MFYEKDADVD…GGGKSGIIET (180 aa)). Residues 22-25 (YGSQ), Arg46, Ser49, Ser51, and 81-84 (DELQ) each bind NADP(+). Residue His106 is part of the active site. Gly132 contacts NADP(+). Residues 181-326 (TFKDECETDL…AELRAMMPWI (146 aa)) enclose the KARI C-terminal knotted domain. Mg(2+) contacts are provided by Asp189, Glu193, Glu225, and Glu229. Residue Ser250 participates in substrate binding.

The protein belongs to the ketol-acid reductoisomerase family. It depends on Mg(2+) as a cofactor.

It carries out the reaction (2R)-2,3-dihydroxy-3-methylbutanoate + NADP(+) = (2S)-2-acetolactate + NADPH + H(+). The catalysed reaction is (2R,3R)-2,3-dihydroxy-3-methylpentanoate + NADP(+) = (S)-2-ethyl-2-hydroxy-3-oxobutanoate + NADPH + H(+). Its pathway is amino-acid biosynthesis; L-isoleucine biosynthesis; L-isoleucine from 2-oxobutanoate: step 2/4. It functions in the pathway amino-acid biosynthesis; L-valine biosynthesis; L-valine from pyruvate: step 2/4. Functionally, involved in the biosynthesis of branched-chain amino acids (BCAA). Catalyzes an alkyl-migration followed by a ketol-acid reduction of (S)-2-acetolactate (S2AL) to yield (R)-2,3-dihydroxy-isovalerate. In the isomerase reaction, S2AL is rearranged via a Mg-dependent methyl migration to produce 3-hydroxy-3-methyl-2-ketobutyrate (HMKB). In the reductase reaction, this 2-ketoacid undergoes a metal-dependent reduction by NADPH to yield (R)-2,3-dihydroxy-isovalerate. This chain is Ketol-acid reductoisomerase (NADP(+)), found in Pelagibacter ubique (strain HTCC1062).